Reading from the N-terminus, the 342-residue chain is Holliday junction branch migration complex subunit RuvB (342 aa).

Positions 1 to 182 (MRIEALNTAP…FGINSRLDYY (182 aa)) are large ATPase domain (RuvB-L). ATP contacts are provided by residues I21, R22, G63, K66, T67, T68, 129-131 (EDY), R172, Y182, and R219. T67 lines the Mg(2+) pocket. The small ATPAse domain (RuvB-S) stretch occupies residues 183 to 253 (SPELLQSIIV…VARRTLESLE (71 aa)). A head domain (RuvB-H) region spans residues 256–342 (EGGLDDMDKK…DHGPLFDHNS (87 aa)). The DNA site is built by R311 and R316.

Belongs to the RuvB family. In terms of assembly, homohexamer. Forms an RuvA(8)-RuvB(12)-Holliday junction (HJ) complex. HJ DNA is sandwiched between 2 RuvA tetramers; dsDNA enters through RuvA and exits via RuvB. An RuvB hexamer assembles on each DNA strand where it exits the tetramer. Each RuvB hexamer is contacted by two RuvA subunits (via domain III) on 2 adjacent RuvB subunits; this complex drives branch migration. In the full resolvosome a probable DNA-RuvA(4)-RuvB(12)-RuvC(2) complex forms which resolves the HJ.

Its subcellular location is the cytoplasm. The catalysed reaction is ATP + H2O = ADP + phosphate + H(+). Its function is as follows. The RuvA-RuvB-RuvC complex processes Holliday junction (HJ) DNA during genetic recombination and DNA repair, while the RuvA-RuvB complex plays an important role in the rescue of blocked DNA replication forks via replication fork reversal (RFR). RuvA specifically binds to HJ cruciform DNA, conferring on it an open structure. The RuvB hexamer acts as an ATP-dependent pump, pulling dsDNA into and through the RuvAB complex. RuvB forms 2 homohexamers on either side of HJ DNA bound by 1 or 2 RuvA tetramers; 4 subunits per hexamer contact DNA at a time. Coordinated motions by a converter formed by DNA-disengaged RuvB subunits stimulates ATP hydrolysis and nucleotide exchange. Immobilization of the converter enables RuvB to convert the ATP-contained energy into a lever motion, pulling 2 nucleotides of DNA out of the RuvA tetramer per ATP hydrolyzed, thus driving DNA branch migration. The RuvB motors rotate together with the DNA substrate, which together with the progressing nucleotide cycle form the mechanistic basis for DNA recombination by continuous HJ branch migration. Branch migration allows RuvC to scan DNA until it finds its consensus sequence, where it cleaves and resolves cruciform DNA. The polypeptide is Holliday junction branch migration complex subunit RuvB (Chlorobaculum parvum (strain DSM 263 / NCIMB 8327) (Chlorobium vibrioforme subsp. thiosulfatophilum)).